Consider the following 396-residue polypeptide: NADH-quinone oxidoreductase subunit D (396 aa).

The protein belongs to the complex I 49 kDa subunit family. As to quaternary structure, NDH-1 is composed of 14 different subunits. Subunits NuoB, C, D, E, F, and G constitute the peripheral sector of the complex.

It is found in the cell inner membrane. The catalysed reaction is a quinone + NADH + 5 H(+)(in) = a quinol + NAD(+) + 4 H(+)(out). NDH-1 shuttles electrons from NADH, via FMN and iron-sulfur (Fe-S) centers, to quinones in the respiratory chain. The immediate electron acceptor for the enzyme in this species is believed to be ubiquinone. Couples the redox reaction to proton translocation (for every two electrons transferred, four hydrogen ions are translocated across the cytoplasmic membrane), and thus conserves the redox energy in a proton gradient. This chain is NADH-quinone oxidoreductase subunit D, found in Methylobacterium radiotolerans (strain ATCC 27329 / DSM 1819 / JCM 2831 / NBRC 15690 / NCIMB 10815 / 0-1).